Reading from the N-terminus, the 264-residue chain is Putative HTH-type transcriptional regulator TrmBL2 (264 aa).

A DNA-binding region (H-T-H motif) is located at residues 33-54; the sequence is LTPAELASVSEVPAPRTYDVLR.

This sequence belongs to the transcriptional regulator TrmB family.

Binds to the maltodextrin transport gene cluster (mdxE operon) promoter and to some other TGM (Thermococcales-Glycolytic-Motif) sequences, but not exclusively. This chain is Putative HTH-type transcriptional regulator TrmBL2 (trmBL2), found in Pyrococcus furiosus (strain ATCC 43587 / DSM 3638 / JCM 8422 / Vc1).